Consider the following 267-residue polypeptide: 4-hydroxy-tetrahydrodipicolinate reductase (267 aa).

NAD(+) contacts are provided by residues 8–13 and D34; that span reads GAAGRM. NADP(+) is bound at residue R35. Residues 98 to 100 and 122 to 125 contribute to the NAD(+) site; these read GTT and AANF. Catalysis depends on H155, which acts as the Proton donor/acceptor. H156 provides a ligand contact to (S)-2,3,4,5-tetrahydrodipicolinate. The active-site Proton donor is K159. Position 165–166 (165–166) interacts with (S)-2,3,4,5-tetrahydrodipicolinate; sequence GT.

It belongs to the DapB family.

The protein resides in the cytoplasm. The catalysed reaction is (S)-2,3,4,5-tetrahydrodipicolinate + NAD(+) + H2O = (2S,4S)-4-hydroxy-2,3,4,5-tetrahydrodipicolinate + NADH + H(+). It carries out the reaction (S)-2,3,4,5-tetrahydrodipicolinate + NADP(+) + H2O = (2S,4S)-4-hydroxy-2,3,4,5-tetrahydrodipicolinate + NADPH + H(+). The protein operates within amino-acid biosynthesis; L-lysine biosynthesis via DAP pathway; (S)-tetrahydrodipicolinate from L-aspartate: step 4/4. Functionally, catalyzes the conversion of 4-hydroxy-tetrahydrodipicolinate (HTPA) to tetrahydrodipicolinate. The chain is 4-hydroxy-tetrahydrodipicolinate reductase from Pseudomonas putida (strain ATCC 700007 / DSM 6899 / JCM 31910 / BCRC 17059 / LMG 24140 / F1).